Consider the following 727-residue polypeptide: Pre-B-cell leukemia transcription factor-interacting protein 1 (727 aa).

Polar residues predominate over residues 1–10 (MASCPDSDNS). Positions 1-135 (MASCPDSDNS…SPHRSLPSSP (135 aa)) are disordered. Low complexity predominate over residues 39–53 (RAPQSPSRAAAEESA). Ser43 carries the phosphoserine modification. Residues 61–70 (TVSQNESSKS) are compositionally biased toward polar residues. Ser130, Ser134, Ser147, Ser148, and Ser149 each carry phosphoserine. A Phosphothreonine modification is found at Thr153. Coiled coils occupy residues 269 to 353 (QNMA…QGAD) and 380 to 421 (SPGF…SLKE). The Nuclear localization signal signature appears at 488-506 (WKTEHWKHKKEASGREKSW). 2 disordered regions span residues 491–568 (EHWK…AKDR) and 701–727 (KRSG…HRQG). Composition is skewed to basic and acidic residues over residues 498–544 (EASG…EPPR), 551–568 (PSGE…AKDR), and 716–727 (GPREEHSPHRQG). The short motif at 696–719 (DKALKKRSGKKDKHLQNRVVGPRE) is the Nuclear localization signal element.

Interacts with ESR1, PBX1, PBX2 and PBX3. Interacts with TEX11.

It is found in the cytoplasm. It localises to the cytoskeleton. The protein localises to the nucleus. Its function is as follows. Regulator of pre-B-cell leukemia transcription factors (BPXs) function. Inhibits the binding of PBX1-HOX complex to DNA and blocks the transcriptional activity of E2A-PBX1. Tethers estrogen receptor-alpha (ESR1) to microtubules and allows them to influence estrogen receptors-alpha signaling. The chain is Pre-B-cell leukemia transcription factor-interacting protein 1 (PBXIP1) from Bos taurus (Bovine).